We begin with the raw amino-acid sequence, 379 residues long: UDP-4-amino-4-deoxy-L-arabinose--oxoglutarate aminotransferase (379 aa).

At K182 the chain carries N6-(pyridoxal phosphate)lysine.

The protein belongs to the DegT/DnrJ/EryC1 family. ArnB subfamily. In terms of assembly, homodimer. Pyridoxal 5'-phosphate serves as cofactor.

The catalysed reaction is UDP-4-amino-4-deoxy-beta-L-arabinose + 2-oxoglutarate = UDP-beta-L-threo-pentopyranos-4-ulose + L-glutamate. The protein operates within nucleotide-sugar biosynthesis; UDP-4-deoxy-4-formamido-beta-L-arabinose biosynthesis; UDP-4-deoxy-4-formamido-beta-L-arabinose from UDP-alpha-D-glucuronate: step 2/3. Its pathway is bacterial outer membrane biogenesis; lipopolysaccharide biosynthesis. In terms of biological role, catalyzes the conversion of UDP-4-keto-arabinose (UDP-Ara4O) to UDP-4-amino-4-deoxy-L-arabinose (UDP-L-Ara4N). The modified arabinose is attached to lipid A and is required for resistance to polymyxin and cationic antimicrobial peptides. This Salmonella choleraesuis (strain SC-B67) protein is UDP-4-amino-4-deoxy-L-arabinose--oxoglutarate aminotransferase.